A 146-amino-acid chain; its full sequence is Snaclec CTL-Eoc124 (146 aa).

An N-terminal signal peptide occupies residues 1–23; sequence MGRFISVSFGLLVVFLSLSGTGA. 3 disulfide bridges follow: C25–C36, C53–C142, and C119–C134. Residues 32–143 enclose the C-type lectin domain; that stretch reads YQGHCYRVFN…CSRTNNVACK (112 aa).

The protein belongs to the snaclec family. Heterodimer; disulfide-linked. As to expression, expressed by the venom gland.

It is found in the secreted. In terms of biological role, interferes with one step of hemostasis (modulation of platelet aggregation, or coagulation cascade, for example). This Echis ocellatus (Ocellated saw-scaled viper) protein is Snaclec CTL-Eoc124.